The chain runs to 1400 residues: DNA-directed RNA polymerase subunit beta' (1400 aa).

Cysteine 71, cysteine 73, cysteine 86, and cysteine 89 together coordinate Zn(2+). Aspartate 462, aspartate 464, and aspartate 466 together coordinate Mg(2+). Zn(2+) contacts are provided by cysteine 811, cysteine 885, cysteine 892, and cysteine 895.

It belongs to the RNA polymerase beta' chain family. In terms of assembly, the RNAP catalytic core consists of 2 alpha, 1 beta, 1 beta' and 1 omega subunit. When a sigma factor is associated with the core the holoenzyme is formed, which can initiate transcription. Requires Mg(2+) as cofactor. Zn(2+) is required as a cofactor.

It catalyses the reaction RNA(n) + a ribonucleoside 5'-triphosphate = RNA(n+1) + diphosphate. Functionally, DNA-dependent RNA polymerase catalyzes the transcription of DNA into RNA using the four ribonucleoside triphosphates as substrates. In Brucella suis (strain ATCC 23445 / NCTC 10510), this protein is DNA-directed RNA polymerase subunit beta'.